The sequence spans 152 residues: Small ribosomal subunit protein uS13 (152 aa).

The protein belongs to the universal ribosomal protein uS13 family. As to quaternary structure, part of the 30S ribosomal subunit. Forms a loose heterodimer with protein S19. Forms two bridges to the 50S subunit in the 70S ribosome.

Its function is as follows. Located at the top of the head of the 30S subunit, it contacts several helices of the 16S rRNA. In the 70S ribosome it contacts the 23S rRNA (bridge B1a) and protein L5 of the 50S subunit (bridge B1b), connecting the 2 subunits; these bridges are implicated in subunit movement. This Pyrobaculum arsenaticum (strain DSM 13514 / JCM 11321 / PZ6) protein is Small ribosomal subunit protein uS13.